We begin with the raw amino-acid sequence, 100 residues long: Large ribosomal subunit protein uL23 (100 aa).

It belongs to the universal ribosomal protein uL23 family. In terms of assembly, part of the 50S ribosomal subunit. Contacts protein L29, and trigger factor when it is bound to the ribosome.

Its function is as follows. One of the early assembly proteins it binds 23S rRNA. One of the proteins that surrounds the polypeptide exit tunnel on the outside of the ribosome. Forms the main docking site for trigger factor binding to the ribosome. The protein is Large ribosomal subunit protein uL23 of Colwellia psychrerythraea (strain 34H / ATCC BAA-681) (Vibrio psychroerythus).